A 240-amino-acid polypeptide reads, in one-letter code: Putative truncated effector protein hopW1-2 (240 aa).

The interval 1-32 (MSPAQIIRTSHSFPPSFTGTSSSAENSHAQSP) is disordered. Over residues 9–23 (TSHSFPPSFTGTSSS) the composition is skewed to low complexity.

This sequence belongs to the HopW family.

The sequence is that of Putative truncated effector protein hopW1-2 (hopW1-2) from Pseudomonas syringae pv. maculicola.